A 227-amino-acid polypeptide reads, in one-letter code: Isopentenyl-diphosphate Delta-isomerase 1 (227 aa).

K36 lines the substrate pocket. Residues H40 and H51 each contribute to the Mg(2+) site. In terms of domain architecture, Nudix hydrolase spans 49-199 (LLHRAFSVFL…EIKITPWFKI (151 aa)). Substrate-binding residues include R70 and K74. Residue C86 is part of the active site. S87 serves as a coordination point for substrate. Mg(2+) contacts are provided by E146 and E148. The active site involves E148. The residue at position 176 (K176) is an N6-acetyllysine. A Microbody targeting signal motif is present at residues 225 to 227 (YRI).

It belongs to the IPP isomerase type 1 family. As to quaternary structure, monomer. Requires Mg(2+) as cofactor.

Its subcellular location is the peroxisome. The catalysed reaction is isopentenyl diphosphate = dimethylallyl diphosphate. The protein operates within isoprenoid biosynthesis; dimethylallyl diphosphate biosynthesis; dimethylallyl diphosphate from isopentenyl diphosphate: step 1/1. In terms of biological role, catalyzes the 1,3-allylic rearrangement of the homoallylic substrate isopentenyl (IPP) to its highly electrophilic allylic isomer, dimethylallyl diphosphate (DMAPP). The sequence is that of Isopentenyl-diphosphate Delta-isomerase 1 (IDI1) from Pongo abelii (Sumatran orangutan).